We begin with the raw amino-acid sequence, 356 residues long: Glutamine synthetase nodule isozyme (356 aa).

Residues 19 to 99 enclose the GS beta-grasp domain; that stretch reads IIAEYIWIGG…VMCDAYTPAG (81 aa). Residues 41 to 66 form a disordered region; that stretch reads PGPVSDPSKLPKWNYDGSSTGQAPGE. In terms of domain architecture, GS catalytic spans 106–356; the sequence is KRHNAAKIFS…IADTTILWKP (251 aa).

The protein belongs to the glutamine synthetase family. Homooctamer.

The protein localises to the cytoplasm. It catalyses the reaction L-glutamate + NH4(+) + ATP = L-glutamine + ADP + phosphate + H(+). The chain is Glutamine synthetase nodule isozyme from Vigna aconitifolia (Moth bean).